Reading from the N-terminus, the 205-residue chain is Inactive ribonuclease-like protein 9 (205 aa).

An N-terminal signal peptide occupies residues 1 to 24 (MMLITTHSLPLLLLLLQLWQPLQF). 3 disulfides stabilise this stretch: C97–C152, C115–C167, and C122–C129. Residues N130 and N142 are each glycosylated (N-linked (GlcNAc...) asparagine).

Belongs to the pancreatic ribonuclease family.

It is found in the secreted. Does not exhibit any ribonuclease activity. The chain is Inactive ribonuclease-like protein 9 (RNASE9) from Cebus albifrons (White-fronted capuchin).